Consider the following 294-residue polypeptide: tRNA dimethylallyltransferase (294 aa).

Residue 10–17 (GITASGKS) participates in ATP binding. Substrate is bound at residue 12–17 (TASGKS). The interaction with substrate tRNA stretch occupies residues 36–39 (DSKQ).

Belongs to the IPP transferase family. In terms of assembly, monomer. It depends on Mg(2+) as a cofactor.

It catalyses the reaction adenosine(37) in tRNA + dimethylallyl diphosphate = N(6)-dimethylallyladenosine(37) in tRNA + diphosphate. Its function is as follows. Catalyzes the transfer of a dimethylallyl group onto the adenine at position 37 in tRNAs that read codons beginning with uridine, leading to the formation of N6-(dimethylallyl)adenosine (i(6)A). This chain is tRNA dimethylallyltransferase, found in Wolbachia sp. subsp. Drosophila simulans (strain wRi).